The chain runs to 516 residues: MPSPTFRLYNTLTHETEPVEPIEEEHLRFYSCGPTVYMYAHIGNFRSFLTADLIRRTAEAIGWDVTNVSNITDVGHLTQDDLVDPGGEDKMQRALEREGERFANIYDLARHYTEAFLEDWGALNLREPEVRPRATEHVTDQLEAVIELVEKEHAYTTDQGVYFSVESVEDYGHLSGNTEAQQLQATERDVVEDPDKRDPRDFALWKHDPQHLMHWHSPWGWGYPGWHIECSVMGMQYLGDRFDLHTGGEDLIFPHHECEIAQNQSLAGHQVVNYWVHTRFLQVEGEKMSKSKGNFYTVRDLIAPGPDDDHVPDSVREQGGVDPLALRYALMQGQYRKPFNFTLDTLHTAARHVRRYQDAAERVDAALAADADGPDELGGRLRPIYDRTLEAMCDDLNTPAATAAALDGVKAIEQTDRLNGATARSARNWLDRTNALLGVVEPEHEADQRTDAGSENGLAPAHLSDSIDTLLEDREAARADGEYARADAIRDTLEALGIEVMDTPDGTEWERREQVG.

Cys32 serves as a coordination point for Zn(2+). The short motif at 34 to 44 (PTVYMYAHIGN) is the 'HIGH' region element. Cys230, His255, and Glu259 together coordinate Zn(2+). Positions 287–291 (KMSKS) match the 'KMSKS' region motif. An ATP-binding site is contributed by Lys290.

The protein belongs to the class-I aminoacyl-tRNA synthetase family. Monomer. Zn(2+) serves as cofactor.

The protein resides in the cytoplasm. It catalyses the reaction tRNA(Cys) + L-cysteine + ATP = L-cysteinyl-tRNA(Cys) + AMP + diphosphate. The sequence is that of Cysteine--tRNA ligase from Salinibacter ruber (strain DSM 13855 / M31).